Reading from the N-terminus, the 275-residue chain is Large ribosomal subunit protein uL2c (275 aa).

Positions 219-255 (TVRGSVMNPCDHPHGGGEGRAPIGRTRPLTPWGKPAL) are disordered.

Belongs to the universal ribosomal protein uL2 family. In terms of assembly, part of the 50S ribosomal subunit.

Its subcellular location is the plastid. It localises to the chloroplast. The protein is Large ribosomal subunit protein uL2c (rpl2) of Trieres chinensis (Marine centric diatom).